The following is a 370-amino-acid chain: N-acyl-L-amino acid amidohydrolase (370 aa).

It belongs to the peptidase M20 family. In terms of assembly, homotetramer. The cofactor is Co(2+).

The catalysed reaction is an N-acyl-L-amino acid + H2O = an L-alpha-amino acid + a carboxylate. It catalyses the reaction an N-acetyl-L-cysteine-S-conjugate + H2O = an S-substituted L-cysteine + acetate. Its function is as follows. Hydrolyzes most efficiently N-acetyl derivatives of aromatic amino acids but is also active on other amino acids. L-stereospecific. This chain is N-acyl-L-amino acid amidohydrolase (amaA), found in Geobacillus stearothermophilus (Bacillus stearothermophilus).